We begin with the raw amino-acid sequence, 467 residues long: Dimethylamine methyltransferase MtbB1 (467 aa).

A non-standard amino acid (pyrrolysine) is located at residue Pyl356.

The protein belongs to the dimethylamine methyltransferase family.

The enzyme catalyses Co(I)-[dimethylamine-specific corrinoid protein] + dimethylamine + H(+) = methyl-Co(III)-[dimethylamine-specific corrinoid protein] + methylamine. It participates in one-carbon metabolism; methanogenesis from dimethylamine. Its function is as follows. Catalyzes the transfer of a methyl group from dimethylamine to the corrinoid cofactor of MtbC. This chain is Dimethylamine methyltransferase MtbB1 (mtbB1), found in Methanosarcina acetivorans (strain ATCC 35395 / DSM 2834 / JCM 12185 / C2A).